A 287-amino-acid chain; its full sequence is Urease accessory protein UreD (287 aa).

This sequence belongs to the UreD family. In terms of assembly, ureD, UreF and UreG form a complex that acts as a GTP-hydrolysis-dependent molecular chaperone, activating the urease apoprotein by helping to assemble the nickel containing metallocenter of UreC. The UreE protein probably delivers the nickel.

The protein resides in the cytoplasm. Required for maturation of urease via the functional incorporation of the urease nickel metallocenter. The chain is Urease accessory protein UreD from Aliivibrio fischeri (strain MJ11) (Vibrio fischeri).